We begin with the raw amino-acid sequence, 92 residues long: C-C motif chemokine 4 (92 aa).

A signal peptide spans 1–23; that stretch reads MKLCVSALSLLLLVAAFCAPGFS. 2 disulfides stabilise this stretch: Cys34-Cys58 and Cys35-Cys74.

It belongs to the intercrine beta (chemokine CC) family. In terms of assembly, homodimer.

The protein resides in the secreted. In terms of biological role, monokine with inflammatory and chemokinetic properties. The polypeptide is C-C motif chemokine 4 (Ccl4) (Mus musculus (Mouse)).